The primary structure comprises 1213 residues: A disintegrin and metalloproteinase with thrombospondin motifs 2 (1213 aa).

The N-terminal stretch at 1 to 28 (MDPPAGAARRLLCPALLLLLLPPPPLLL) is a signal peptide. Residues 29–260 (LPPPPASVRL…INSSRRRVRR (232 aa)) constitute a propeptide that is removed on maturation. An N-linked (GlcNAc...) asparagine glycan is attached at Asn111. The segment at 211–232 (YRRPPTPKPPPVSEPQALDTGV) is disordered. A compositionally biased stretch (pro residues) spans 214 to 223 (PPTPKPPPVS). The N-linked (GlcNAc...) asparagine glycan is linked to Asn252. Positions 267–471 (YNIEVLLGVD…HSYDCLRDDP (205 aa)) constitute a Peptidase M12B domain. 10 disulfide bridges follow: Cys344/Cys393, Cys387/Cys466, Cys426/Cys452, Cys493/Cys518, Cys504/Cys527, Cys513/Cys546, Cys540/Cys551, Cys574/Cys611, Cys578/Cys616, and Cys589/Cys601. His409 lines the Zn(2+) pocket. Glu410 is a catalytic residue. Residues His413 and His419 each coordinate Zn(2+). In terms of domain architecture, Disintegrin spans 480–560 (PQLPGLHYSM…CIWLTPDILK (81 aa)). The TSP type-1 1 domain maps to 561-617 (RDGNWGAWTPFGSCSRTCGTGVKFRTRQCDNPHPANGGRTCSGLAYDFQLCNPQDCP). Positions 692–694 (RGD) match the Cell attachment site motif. The segment at 723–851 (CKVVKGTFTR…LNVDDNNVLE (129 aa)) is spacer. TSP type-1 domains follow at residues 855–913 (VRHE…NPQE), 915–975 (SQPV…NREL), and 976–1030 (CPGR…APCP). Asn949, Asn950, and Asn994 each carry an N-linked (GlcNAc...) asparagine glycan. 3 cysteine pairs are disulfide-bonded: Cys988-Cys1024, Cys992-Cys1029, and Cys1003-Cys1013. Residue Asn1032 is glycosylated (N-linked (GlcNAc...) asparagine). The PLAC domain occupies 1060–1098 (SKDQCQGDKSMFCRMEVLSRYCSIPSYNKLCCKSCNPPR). N-linked (GlcNAc...) asparagine glycans are attached at residues Asn1099, Asn1147, and Asn1152.

May belong to a multimeric complex. Binds specifically to collagen type XIV. Requires Zn(2+) as cofactor. Post-translationally, the precursor is cleaved by a furin endopeptidase. In terms of processing, glycosylated. Can be O-fucosylated by POFUT2 on a serine or a threonine residue found within the consensus sequence C1-X(2)-(S/T)-C2-G of the TSP type-1 repeat domains where C1 and C2 are the first and second cysteine residue of the repeat, respectively. Fucosylated repeats can then be further glycosylated by the addition of a beta-1,3-glucose residue by the glucosyltransferase, B3GALTL. Fucosylation mediates the efficient secretion of ADAMTS family members. Can also be C-glycosylated with one or two mannose molecules on tryptophan residues within the consensus sequence W-X-X-W of the TPRs, and N-glycosylated. These other glycosylations can also facilitate secretion.

It localises to the secreted. The protein localises to the extracellular space. The protein resides in the extracellular matrix. It carries out the reaction Cleaves the N-propeptide of collagen chain alpha1(I) at Pro-|-Gln and of alpha1(II) and alpha2(I) at Ala-|-Gln.. Its function is as follows. Cleaves the propeptides of type I and II collagen prior to fibril assembly. Does not act on type III collagen. Cleaves lysyl oxidase LOX at a site downstream of its propeptide cleavage site to produce a short LOX form with reduced collagen-binding activity. This is A disintegrin and metalloproteinase with thrombospondin motifs 2 (Adamts2) from Mus musculus (Mouse).